The sequence spans 421 residues: G/T mismatch-specific thymine DNA glycosylase (421 aa).

The interval 45–108 is disordered; the sequence is PNMATVTEQQ…STKSKEKQEK (64 aa). A compositionally biased stretch (basic and acidic residues) spans 77-89; that stretch reads RAAEPQEPVEPKK. Positions 91–100 are enriched in basic residues; it reads ATSKKSGKST. Residues lysine 114 and lysine 259 each participate in a glycyl lysine isopeptide (Lys-Gly) (interchain with G-Cter in SUMO2) cross-link. Lysine 341 participates in a covalent cross-link: Glycyl lysine isopeptide (Lys-Gly) (interchain with G-Cter in SUMO); alternate. A Glycyl lysine isopeptide (Lys-Gly) (interchain with G-Cter in SUMO2); alternate cross-link involves residue lysine 341.

It belongs to the uracil-DNA glycosylase (UDG) superfamily. TDG/mug family. Homodimer. Interacts with AICDA and GADD45A. In terms of processing, sumoylation on Lys-341 by either SUMO1 or SUMO2 induces dissociation of the product DNA.

It is found in the nucleus. It carries out the reaction Hydrolyzes mismatched double-stranded DNA and polynucleotides, releasing free thymine.. In terms of biological role, DNA glycosylase that plays a key role in active DNA demethylation: specifically recognizes and binds 5-formylcytosine (5fC) and 5-carboxylcytosine (5caC) in the context of CpG sites and mediates their excision through base-excision repair (BER) to install an unmethylated cytosine. Cannot remove 5-hydroxymethylcytosine (5hmC). According to an alternative model, involved in DNA demethylation by mediating DNA glycolase activity toward 5-hydroxymethyluracil (5hmU) produced by deamination of 5hmC. Also involved in DNA repair by acting as a thymine-DNA glycosylase that mediates correction of G/T mispairs to G/C pairs: in the DNA of higher eukaryotes, hydrolytic deamination of 5-methylcytosine to thymine leads to the formation of G/T mismatches. Its role in the repair of canonical base damage is however minor compared to its role in DNA demethylation. It is capable of hydrolyzing the carbon-nitrogen bond between the sugar-phosphate backbone of the DNA and a mispaired thymine. In addition to the G/T, it can remove thymine also from C/T and T/T mispairs in the order G/T &gt;&gt; C/T &gt; T/T. It has no detectable activity on apyrimidinic sites and does not catalyze the removal of thymine from A/T pairs or from single-stranded DNA. It can also remove uracil and 5-bromouracil from mispairs with guanine. The polypeptide is G/T mismatch-specific thymine DNA glycosylase (Tdg) (Mus musculus (Mouse)).